The chain runs to 5085 residues: MGNEASLEGEGLPEGLAAAAGAGGSGSALHPGIPAGMEADLSQLSEEERRQIAAVMSRAQGLPKGSVPPAAAESPSMHRKQELDSSQAPQQPGKPPDPGRPTQPGLSKSRTTDTFRSEQKLPGRSPSTISLKESKSRTDFKEEYKSSMMPGFFSDVNPLSAVSSVVNKFNPFDLISDSEASQEETTKKQKVVQKEQGKSEGMAKPPLQQPSPKPIPKQQGQVKEVIQQDSSPKSVSSQQAEKVKPQAPGTGKPSQQSPAQTPAQQASPGKPVAQQPGSAKATVQQPGPAKSPAQPAGTGKSPAQPPAKTPGQQAGLEKTSSSQQPGPKSLAQTPGHGKFPLGPVKSPAQQPGTAKHPAQQPGPQTAAKVPGPTKTPAQQSGPGKTPAQQPGPTKPSPQQPIPAKPQPQQPVATKTQPQQSAPAKPQPQQPAPAKPQPQQPTPAKPQPQPPTPAKPQPQPPTATKPQPQPPTATKPHHQQPGLAKPSAQQPTKSISQTVTGRPLQPPPTSAAQTPAQGLSKTICPLCNTTELLLHIPEKANFNTCTECQSTVCSLCGFNPNPHLTEIKEWLCLNCQMQRALGGDLAAAIPSSPQPTPKAATAPTATASKSPVPSQQASPKKEPPSKQDSPKALESKKPPEPKKPPEPKKPPEPKKPPPLVKQPTLHGPTPATAPQLPVAEALPEPAPPKEPSGPLPEQAKAPVGDVEPKQPKMTETRADIQSSSTTKPDILSSQVQSQAQVKTASPLKTDSAKPSQSFPPTGEKTTPLDSKAMPRPASDSKIISQPGPGSESKDPKHIDPIQKKDEPKKAQPKGSPKPETKPVPKGSPTPSGTRPTAGQAAPPSQQPPKPQEQSRRFSLNLGGITDAPKSQPTTPQETVTGKLFGFGASIFSQASNLISTAGQQGPHPQTGPAAPSKQAPTPSQSPAAQGPAKSTGQLPPAPAKATAVKKEAKAAAAENLESKPEQAPTAKKTEKDKKPPPAKVGKPPPSEPEKAVPAHKPDKTTKPKPACPLCRTELNLGSQEPPNFNTCTECKNQVCNLCGFNPTPHLTEIQEWLCLNCQTQRAISGQLGDMGKMPPAPSGPKASPMPAPAEPSSQKTPTGTQVKGKKKEAEGKTEAEKPVPEKETASIEKTPPMVTTDQKLEESEGKKSKVSALPEKKPSEEEKAISADKKERKPPAEEKPPLEEKKPIPVDKKLPPEAKPLSSEGEEKHEILKAHVQIPEEEPTGKVAAKAGEEEQQPDSRPEALPGATPLTLPKAGEKERAVAQPQAEGSSKDGQGERSKEKTEKEEDKSDTSSSQQPKSPQGLSDTGYSSDGISGSLGEIPSLIPSDEKDLLKGLKKDSFSQESSPSSPSDLAKLESTVLSILEAQASTLVGEKAEKKTQPQKISPEKPQDQQKTQTASETLDITISEEEIKESQEKKVSPKKDSEQGFPSRKEHKEKPELVDDLSPRRASYDSVEDSSESENSPVVRRKRRTSIGSSSSDEYKQEDSQGSGEEEDFIRKQIIEMSADEDASGSEDEEFIRSQLKEISGVGESQKREEAKGKGKGVAGKHRRLTRKSSTSFDDDAGRRHSWHDEDDETFDESPELKFRETKSQESEELVVAGGGGLRRFKTIELNSTIADKYSSESSQKKTILYFDEEPELEMESLTDSPEDRSRGEGSSSLHASSFTPGTSPTSVSSLDEDSDSSPSHKKGESKQQRKARHRSHGPLLPTIEDSSEEEELREEEELLKEQEKQRELEQQQRKSSSKKSKKDKDELRAQRRRERPKTPPSNLSPIEDASPTEELRQAAEMEELHRSSCSEYSPSIESDPEGFEISPEKIIEVQKVYKLPAAVSLYSPTDEQSVMQKEGVQKALKSAEEMYEEMMQKPHKYKAFPAANERDEVFEKEPLYGGMLIEDYIYESLVEDTYNGSVDGSLLTRQEEQNGFMQQRGREQKVRLQEQIYDDPMQKISDLQKEFYELESLHSVVPQEDIVSSSYIIPESHEIVDLGSMVMSTSEEKKLLDADSAYEELMRRQQVQVTDGSSPVQTTIGDDMAESTLDFDRVQDASLTSSILSGASLTDSTSSATLSIPDVKITQQFSAEELEDEYVTDYTREIQDIIAHESLILTYSEPSESATSVPPSDTPSLTSSISSVCTTDSSSPVTTLDSLTTVYTEPADVMTKFKDSEEISSTYFPGSIIDYPEDISVSLDRTIMPESRTNEDRIVLSFSGMAPSVVESVGTKPERPQADTISTDLPISEKDLIKGKKETGDGIILEVLDAYKDKREESEAELTKISLPEPGLAQAPSSVTAPQIKEQHVSPHSVSGKISGQEKPTYRLPSGSLPVSTHPSKSRPFFRSSSLDISAQPPPPPPPPPPSPSTSSPPPTPPLPPATSPKPPTYPKKKLAVAATVTSTTIVTTHVDALTMVEAAAARRSNGLPATKMCAIAPPPVPPKPSQIPTGLVFTHRPEAIKPPIAPKPAVPQIPVTTQKPTDTCPKPTGLSLTSTMSLNLVTSADYNVPSPTSPLSPHSNKSSPRYSKSLMDTYVVITLPSEPGTPTDSSAAQAITSWPLGSPPKDLVSLETVFSVVPPMTSTEIPSASQPTLYTSGALGTFSVTPAVTASLFQTVPTSLTQFLPAEASKPEVSAVSSAVPSVAPRSVSIPIPPEPLALDRHQYKENGKLPLIGDAIDLRTIPKSEVKVTEKCMDLSASAMDVKRQTTANEVYRRQISAVQPSIINLSAASSLGTPVTMDSKTVAVVTCTDTTIYTTGTESQVGIEHAVTSPLQLTTSKHTELPYRKPSSQAFPTIRDEAPINLSLGPSAQAVTLAVTKPVTVPPVGVTNGWTDSTLSQGVADGEVVDLSTSKSHRTVVTMDESTSNVVTKIIEDDEKPVDLTAGRRAVCCDMVYTLPFGRSCTAQQPATTLPEDRFGYRDDHYQYDRSGPYGYRGIGGMKPSMSDTNLPEAGHFFYKSKNAFDYSGGTGAAVDLTSGRVSTGEVMDYSSKTTGPYPETRQVISGVGISTPQYSTARLTPPPGPQYGVGSVLRSSNGVVYSSVATPIPSTFAITTQPGSIFSTTVRDLSGIPTTDAMTSLSALHQSQPMPRSYFITTGASETDIAVTGIDINASLQTITMETLPAETMDSVPTLTTASEVFSEVVGEESTLLIVPDEDKQQQQLDLERELLELEKIKQQRFAEELEWERQEIQRFREQEKIMVQKKLEELQSMKQHLLYQQEEERQAQFMMRQETLAQQQLQLEQIQQLQQQLHQQLEEQKLRQIYQYNYDPSGTSSPQTTTEQAILEGQYAATEGSQFWATEDATTTASTVVAIEIPQSQGWYTVQSDGVTQYIAPPGILSTVSEIPLTDVVVKEEKQPKKRSSGAKVRGQYDEMGESVADDPRNLKKIVDSGVQTDDEETADRSYASRRRRTKKSVDTSVQTDDEDQDEWDMPSRSRRKARTGKYGDSTAEGDKTKPLSKVSSVAVQTVAEISVQTEPVGTIRTPSIRARVDAKVEIIKHISAPEKTYKGGSLGCQTETDSDTQSPPYLGATSPPKDKKRPTPLEIGYSSSHLRADPTVQLAPSPPKSPKVLYSPISPLSPGNALEPAFVPYEKPLPDDISPQKVLHPDMAKVPPASPKTAKMMQRSMSDPKPLSPTADESSRAPFQYSEGFTTKGSQTMTASGTQKKVKRTLPNPPPEEVSTGTQSTYSTMGTASRRRMCRTNTMARAKILQDIDRELDLVERESAKLRKKQAELDEEEKEIDAKLRYLEMGINRRKEALLKEREKRERAYLQGVAEDRDYMSDSEVSSTRPSRVESQHGVERPRTAPQTEFSQFIPPQTQTEAQLVPPTSPYTQYQYSSPALPTQAPTPYTQQSHFQQQTLYHQQVSPYQTQPTFQAVATMSFTPQAQPTPTPQPSYQLPSQMMVIQQKPRQTTLYLEPKITSNYEVIRNQPLMIAPVSTDNTYAVSHLGSKYNSLDLRIGLEERSSMAGSPISSISADSFYADIDHHTSRNYVLIDDIGDITKGTAALSTVFSLHEKDLSKTDRLLRTTETRRSQEVTDFLAPLQTSSRLHSYVKADEDPMEDPYELKLLKHQIKQEFRRGTESLDHLAGLSHYYHADTSYRHFPKSEKYSISRLTLEKQAAKQLPAAILYQKQSKHKKSLIDPKMSKFSPIQESRDLEPDYPTYMSSGTSSIGGISSRARLLQDDITFGLRKNITDQQKFMGSSLGSGLGTLGNTIRSALQDEADKPYSSGSRSRPSSRPSSVYGLDLSIKRDSSSSSLRLKAQEAEALDVSFGHSSSSARTKPTSLPISQSRGRIPIVAQSSEEESPLSPVGQPMGMARAAAGPLPPISADTRDQFGSSHSLPEVQQHMREESRTRGYDRDIAFIMDDFQHAMSDSEAYHLRREETDWFDKPRESRLENGHGLDRKLPERLVHSRPLSQHQEQILQMNGKTIHYIFPHARVKITRDFKDHTGSGNGLGIRIVGGKEIPGHSGEIGAYIAKILPGESAEHTGPLMEGMQVLEWNGVPLTSKTYEEVQSIINQQSGEAEICVRLDLNMLSDSENPQHLELHEPPKVDKAKSPGVDPKQLAAELQKVSLQQSPLVMSSVVEKGSHAHSGPTSAGSSSVPSPGQPGSPSVSKKKHSSTKPTDGPKAASHPITGEIQLQINYDLGNLIIHILQARNLVPRDNNGYSDPFVKVYLLPGRGQVMVVQNASAEYKRRTKYVQKSLNPEWNQTVIYKSISMEQLMKKTLEVTVWDYDRFSSNDFLGEVLIDLSSTSHLDNTPRWYPLKEQTESIDHGKSHSSQNSQQSPKPSVIKSRSHGIFPDPSKDMQVPTIEKSHSSPGSSKSSSEGHLRSHGPSRSQSKTSVAQTHLEDAGVAIAAAEAAVQQLRIQPTKPTNHRPAESSVSTGSSGSSVGSGYSVDSEGSSCVAGEPNLLPIPRIGKMGQNGQDPVKQPGMGATDTEGKTQVMGEIKLALKKEMKTDGEQLIVEILQCRNITYKFKSPDHLPDLYVKLYVINISTQKKVIKKKTRVCRHDREPSFNETFRFSLSPAGHSLQILLFSNGGKFMKKTLIGEACIWLDKVDLRKRIVNWHKLLVSPTQTH.

Residues 1 to 20 (MGNEASLEGEGLPEGLAAAA) show a composition bias toward low complexity. 2 disordered regions span residues 1 to 142 (MGNE…DFKE) and 173 to 516 (DLIS…TPAQ). The span at 92 to 101 (PGKPPDPGRP) shows a compositional bias: pro residues. Composition is skewed to basic and acidic residues over residues 110–121 (RTTDTFRSEQKL), 132–142 (KESKSRTDFKE), and 184–198 (ETTK…EQGK). Residues Ser-211 and Ser-231 each carry the phosphoserine modification. The span at 227-240 (QQDSSPKSVSSQQA) shows a compositional bias: polar residues. Low complexity predominate over residues 253 to 268 (PSQQSPAQTPAQQASP). Composition is skewed to polar residues over residues 275–285 (QPGSAKATVQQ), 318–332 (KTSS…SLAQ), and 375–391 (TPAQ…QQPG). Residues 372-491 (PTKTPAQQSG…LAKPSAQQPT (120 aa)) are 12 X 10 AA tandem approximate repeats of P-A-K-P-Q-P-Q-Q-P-X. The span at 392-408 (PTKPSPQQPIPAKPQPQ) shows a compositional bias: pro residues. Residues 409–423 (QPVATKTQPQQSAPA) show a composition bias toward low complexity. Residues 424–472 (KPQPQQPAPAKPQPQQPTPAKPQPQPPTPAKPQPQPPTATKPQPQPPTA) are compositionally biased toward pro residues. Positions 486-499 (SAQQPTKSISQTVT) are enriched in polar residues. The C4-type zinc finger occupies 523–547 (CPLCNTTELLLHIPEKANFNTCTEC). 5 disordered regions span residues 586-880 (AAIP…TVTG), 896-1012 (LIST…ACPL), 1069-1357 (QLGD…PSDL), 1373-1604 (STLV…EELV), and 1622-1815 (TIAD…SDPE). Over residues 596-613 (PKAATAPTATASKSPVPS) the composition is skewed to low complexity. Over residues 618-654 (PKKEPPSKQDSPKALESKKPPEPKKPPEPKKPPEPKK) the composition is skewed to basic and acidic residues. Residues 672-682 (APQLPVAEALP) are compositionally biased toward low complexity. Over residues 683 to 693 (EPAPPKEPSGP) the composition is skewed to pro residues. A compositionally biased stretch (basic and acidic residues) spans 705–717 (VEPKQPKMTETRA). The span at 718–767 (DIQSSSTTKPDILSSQVQSQAQVKTASPLKTDSAKPSQSFPPTGEKTTPL) shows a compositional bias: polar residues. Over residues 790-808 (ESKDPKHIDPIQKKDEPKK) the composition is skewed to basic and acidic residues. Ser-857 and Ser-869 each carry phosphoserine. 3 stretches are compositionally biased toward polar residues: residues 867–878 (PKSQPTTPQETV), 896–906 (LISTAGQQGPH), and 917–936 (QAPT…STGQ). A Phosphothreonine modification is found at Thr-873. Basic and acidic residues predominate over residues 990 to 1004 (EPEKAVPAHKPDKTT). A C4-type zinc finger spans residues 1010–1033 (CPLCRTELNLGSQEPPNFNTCTEC). Residues 1077–1092 (PPAPSGPKASPMPAPA) show a composition bias toward pro residues. Over residues 1110–1129 (KEAEGKTEAEKPVPEKETAS) the composition is skewed to basic and acidic residues. Residue Thr-1133 is modified to Phosphothreonine. Composition is skewed to basic and acidic residues over residues 1141 to 1150 (QKLEESEGKK), 1157 to 1199 (PEKK…KLPP), and 1274 to 1295 (SSKD…DKSD). Residues 1300–1318 (QQPKSPQGLSDTGYSSDGI) are compositionally biased toward polar residues. Residues Ser-1304, Ser-1314, Ser-1315, Ser-1344, Ser-1346, Ser-1349, Ser-1350, and Ser-1353 each carry the phosphoserine modification. Basic and acidic residues predominate over residues 1331-1345 (SDEKDLLKGLKKDSF). The span at 1346–1355 (SQESSPSSPS) shows a compositional bias: low complexity. Residues 1378-1396 (EKAEKKTQPQKISPEKPQD) are compositionally biased toward basic and acidic residues. A compositionally biased stretch (polar residues) spans 1397–1407 (QQKTQTASETL). Residues 1417–1456 (KESQEKKVSPKKDSEQGFPSRKEHKEKPELVDDLSPRRAS) are compositionally biased toward basic and acidic residues. Phosphoserine occurs at positions 1451, 1463, 1464, 1466, 1469, 1493, 1496, 1517, and 1519. Residues 1511 to 1523 (SADEDASGSEDEE) are compositionally biased toward acidic residues. Thr-1564 carries the post-translational modification Phosphothreonine. Ser-1565, Ser-1575, and Ser-1587 each carry phosphoserine. The segment covering 1578–1587 (DEDDETFDES) has biased composition (acidic residues). Over residues 1588–1599 (PELKFRETKSQE) the composition is skewed to basic and acidic residues. The segment covering 1622–1635 (TIADKYSSESSQKK) has biased composition (polar residues). A compositionally biased stretch (acidic residues) spans 1640–1650 (FDEEPELEMES). At Ser-1650 the chain carries Phosphoserine. At Thr-1652 the chain carries Phosphothreonine. Ser-1654 and Ser-1659 each carry phosphoserine. Positions 1662–1679 (EGSSSLHASSFTPGTSPT) are enriched in polar residues. The span at 1719 to 1732 (DSSEEEELREEEEL) shows a compositional bias: acidic residues. Phosphoserine is present on residues Ser-1720 and Ser-1721. Residues 1733 to 1746 (LKEQEKQRELEQQQ) are compositionally biased toward basic and acidic residues. Phosphothreonine is present on Thr-1772. The residue at position 1778 (Ser-1778) is a Phosphoserine. The span at 1787–1802 (EELRQAAEMEELHRSS) shows a compositional bias: basic and acidic residues. Phosphoserine occurs at positions 1807, 1812, 1820, and 1841. Disordered regions lie at residues 2116–2139 (PSES…SSVC), 2275–2385 (ELTK…PTYP), and 2456–2486 (KPPI…TGLS). Residues 2121-2139 (TSVPPSDTPSLTSSISSVC) are compositionally biased toward low complexity. Pro residues predominate over residues 2350-2384 (QPPPPPPPPPPSPSTSSPPPTPPLPPATSPKPPTY). Ser-2511 carries the phosphoserine modification. An O-linked (GlcNAc) threonine glycan is attached at Thr-2702. Ser-2976 carries an O-linked (GlcNAc) serine glycan. The residue at position 3014 (Thr-3014) is a Phosphothreonine. Disordered regions lie at residues 3350-3457 (KEEK…PLSK) and 3503-3572 (KTYK…LYSP). Residue Ser-3374 is modified to Phosphoserine. Over residues 3377–3386 (DDPRNLKKIV) the composition is skewed to basic and acidic residues. Phosphoserine is present on Ser-3388. Thr-3392 and Thr-3419 each carry phosphothreonine. Residues 3419–3428 (TDDEDQDEWD) show a composition bias toward acidic residues. Polar residues predominate over residues 3511–3523 (GCQTETDSDTQSP). Ser-3522, Ser-3530, Ser-3561, Ser-3565, Ser-3571, Ser-3574, Ser-3577, Ser-3598, Ser-3624, Ser-3626, and Ser-3632 each carry phosphoserine. Disordered regions lie at residues 3602 to 3695 (VLHP…ASRR) and 3774 to 3816 (AEDR…FIPP). 2 stretches are compositionally biased toward polar residues: residues 3647–3663 (EGFT…SGTQ) and 3679–3691 (STGT…TMGT). Ser-3781 bears the Phosphoserine mark. The span at 3791–3803 (SRVESQHGVERPR) shows a compositional bias: basic and acidic residues. Residues 3805–3816 (APQTEFSQFIPP) show a composition bias toward polar residues. Phosphoserine is present on residues Ser-4034 and Ser-4150. Disordered stretches follow at residues 4225–4248 (ADKP…YGLD) and 4272–4291 (VSFG…LPIS). Low complexity predominate over residues 4228 to 4248 (PYSSGSRSRPSSRPSSVYGLD). Positions 4275-4291 (GHSSSSARTKPTSLPIS) are enriched in polar residues. Phosphoserine occurs at positions 4304, 4308, 4311, 4340, and 4376. Positions 4335–4357 (RDQFGSSHSLPEVQQHMREESRT) are disordered. Residues 4442-4536 (RVKITRDFKD…EAEICVRLDL (95 aa)) form the PDZ domain. The disordered stretch occupies residues 4589 to 4638 (VEKGSHAHSGPTSAGSSSVPSPGQPGSPSVSKKKHSSTKPTDGPKAASHP). The segment covering 4595-4618 (AHSGPTSAGSSSVPSPGQPGSPSV) has biased composition (low complexity). Phosphoserine is present on Ser-4609. Residues 4639 to 4768 (ITGEIQLQIN…SHLDNTPRWY (130 aa)) form the C2 1 domain. Ca(2+) contacts are provided by Asp-4668 and Asp-4674. Phosphoserine is present on Ser-4723. Ca(2+) is bound by residues Asp-4738, Asp-4740, Ser-4743, and Asp-4746. Disordered regions lie at residues 4775 to 4851 (ESID…SVAQ) and 4874 to 4908 (QPTK…SEGS). Composition is skewed to low complexity over residues 4783–4795 (HSSQ…PKPS) and 4822–4832 (SSPGSSKSSSE). The span at 4840–4851 (PSRSQSKTSVAQ) shows a compositional bias: polar residues. Low complexity predominate over residues 4886–4908 (SSVSTGSSGSSVGSGYSVDSEGS). The 126-residue stretch at 4950 to 5075 (VMGEIKLALK…DLRKRIVNWH (126 aa)) folds into the C2 2 domain.

Interacts with BSN, ERC2/CAST1, RIMS1 and UNC13A. Interacts (via C-terminus) with TRIO (via N-terminus). Interacts with CTBP1. Interacts with SIAH1; this interaction negatively regulates SIAH1 E3 ligase activity. Directly interacts with GIT1 and GIT2. Ca(2+) is required as a cofactor. Expressed in brain (at protein level).

The protein localises to the presynaptic active zone. In terms of biological role, scaffold protein of the presynaptic cytomatrix at the active zone (CAZ) which is the place in the synapse where neurotransmitter is released. After synthesis, participates in the formation of Golgi-derived membranous organelles termed Piccolo-Bassoon transport vesicles (PTVs) that are transported along axons to sites of nascent synaptic contacts. At the presynaptic active zone, regulates the spatial organization of synaptic vesicle cluster, the protein complexes that execute membrane fusion and compensatory endocytosis. Organizes as well the readily releasable pool of synaptic vesicles and safeguards a fraction of them to be not immediately available for action potential-induced release. Also functions in processes other than assembly such as the regulation of specific presynaptic protein ubiquitination by interacting with SIAH1 or the regulation of presynaptic autophagy. Also mediates synapse to nucleus communication leading to reconfiguration of gene expression by associating with the transcriptional corepressor CTBP1 and by subsequently reducing the size of its pool available for nuclear import. The sequence is that of Protein piccolo (Pclo) from Rattus norvegicus (Rat).